The primary structure comprises 219 residues: Cytochrome c oxidase assembly protein CtaG (219 aa).

The span at 1–13 (MDATDQGKSTSTT) shows a compositional bias: polar residues. A disordered region spans residues 1-24 (MDATDQGKSTSTTAAQAAPGKAAP). The Cytoplasmic segment spans residues 1 to 29 (MDATDQGKSTSTTAAQAAPGKAAPRRGIG). Over residues 14–24 (AAQAAPGKAAP) the composition is skewed to low complexity. Residues 30–52 (RDALVGGICGAVVVLMIGASYAA) form a helical; Signal-anchor for type II membrane protein membrane-spanning segment. Residues 53-219 (VPFYNWFCRA…GEPDKPRGSL (167 aa)) lie on the Periplasmic side of the membrane.

The protein belongs to the COX11/CtaG family.

The protein localises to the cell inner membrane. In terms of biological role, exerts its effect at some terminal stage of cytochrome c oxidase synthesis, probably by being involved in the insertion of the copper B into subunit I. In Bradyrhizobium sp. (strain ORS 278), this protein is Cytochrome c oxidase assembly protein CtaG.